A 486-amino-acid polypeptide reads, in one-letter code: Protein nucleotidyltransferase YdiU (486 aa).

The ATP site is built by Gly-90, Gly-92, Arg-93, Lys-113, Asp-125, Gly-126, Arg-176, and Arg-183. Asp-252 functions as the Proton acceptor in the catalytic mechanism. Positions 253 and 262 each coordinate Mg(2+). Asp-262 is an ATP binding site.

This sequence belongs to the SELO family. Requires Mg(2+) as cofactor. Mn(2+) serves as cofactor.

It carries out the reaction L-seryl-[protein] + ATP = 3-O-(5'-adenylyl)-L-seryl-[protein] + diphosphate. The catalysed reaction is L-threonyl-[protein] + ATP = 3-O-(5'-adenylyl)-L-threonyl-[protein] + diphosphate. The enzyme catalyses L-tyrosyl-[protein] + ATP = O-(5'-adenylyl)-L-tyrosyl-[protein] + diphosphate. It catalyses the reaction L-histidyl-[protein] + UTP = N(tele)-(5'-uridylyl)-L-histidyl-[protein] + diphosphate. It carries out the reaction L-seryl-[protein] + UTP = O-(5'-uridylyl)-L-seryl-[protein] + diphosphate. The catalysed reaction is L-tyrosyl-[protein] + UTP = O-(5'-uridylyl)-L-tyrosyl-[protein] + diphosphate. Nucleotidyltransferase involved in the post-translational modification of proteins. It can catalyze the addition of adenosine monophosphate (AMP) or uridine monophosphate (UMP) to a protein, resulting in modifications known as AMPylation and UMPylation. This Pseudomonas putida (strain ATCC 47054 / DSM 6125 / CFBP 8728 / NCIMB 11950 / KT2440) protein is Protein nucleotidyltransferase YdiU.